A 94-amino-acid chain; its full sequence is Small ribosomal subunit protein uS19c (94 aa).

It belongs to the universal ribosomal protein uS19 family.

It is found in the plastid. It localises to the chloroplast. Its function is as follows. Protein S19 forms a complex with S13 that binds strongly to the 16S ribosomal RNA. In Cyanidioschyzon merolae (strain NIES-3377 / 10D) (Unicellular red alga), this protein is Small ribosomal subunit protein uS19c.